The chain runs to 444 residues: Phosphoglucosamine mutase (444 aa).

Ser-102 functions as the Phosphoserine intermediate in the catalytic mechanism. Residues Ser-102, Asp-241, Asp-243, and Asp-245 each coordinate Mg(2+). Ser-102 carries the post-translational modification Phosphoserine.

The protein belongs to the phosphohexose mutase family. The cofactor is Mg(2+). Activated by phosphorylation.

The catalysed reaction is alpha-D-glucosamine 1-phosphate = D-glucosamine 6-phosphate. In terms of biological role, catalyzes the conversion of glucosamine-6-phosphate to glucosamine-1-phosphate. The sequence is that of Phosphoglucosamine mutase from Haemophilus ducreyi (strain 35000HP / ATCC 700724).